Here is a 254-residue protein sequence, read N- to C-terminus: Imidazole glycerol phosphate synthase subunit HisF (254 aa).

Residues aspartate 13 and aspartate 132 contribute to the active site.

It belongs to the HisA/HisF family. As to quaternary structure, heterodimer of HisH and HisF.

It localises to the cytoplasm. The catalysed reaction is 5-[(5-phospho-1-deoxy-D-ribulos-1-ylimino)methylamino]-1-(5-phospho-beta-D-ribosyl)imidazole-4-carboxamide + L-glutamine = D-erythro-1-(imidazol-4-yl)glycerol 3-phosphate + 5-amino-1-(5-phospho-beta-D-ribosyl)imidazole-4-carboxamide + L-glutamate + H(+). Its pathway is amino-acid biosynthesis; L-histidine biosynthesis; L-histidine from 5-phospho-alpha-D-ribose 1-diphosphate: step 5/9. Its function is as follows. IGPS catalyzes the conversion of PRFAR and glutamine to IGP, AICAR and glutamate. The HisF subunit catalyzes the cyclization activity that produces IGP and AICAR from PRFAR using the ammonia provided by the HisH subunit. The polypeptide is Imidazole glycerol phosphate synthase subunit HisF (Wolinella succinogenes (strain ATCC 29543 / DSM 1740 / CCUG 13145 / JCM 31913 / LMG 7466 / NCTC 11488 / FDC 602W) (Vibrio succinogenes)).